The chain runs to 181 residues: Adenylate kinase (181 aa).

Residue 10-15 participates in ATP binding; sequence GAGKGT. Positions 30-59 are NMP; that stretch reads STGDLFRANIGEGTPLGIEAKQYIDAGKLV. Residues Thr-31, Arg-36, 57–59, 85–88, and Gln-92 each bind AMP; these read KLV and GFPR. The tract at residues 126–132 is LID; that stretch reads SRGRADD. Arg-127 is an ATP binding site. AMP-binding residues include Arg-129 and Arg-140. Gly-166 is an ATP binding site.

The protein belongs to the adenylate kinase family. As to quaternary structure, monomer.

The protein localises to the cytoplasm. The catalysed reaction is AMP + ATP = 2 ADP. The protein operates within purine metabolism; AMP biosynthesis via salvage pathway; AMP from ADP: step 1/1. In terms of biological role, catalyzes the reversible transfer of the terminal phosphate group between ATP and AMP. Plays an important role in cellular energy homeostasis and in adenine nucleotide metabolism. The chain is Adenylate kinase from Corynebacterium glutamicum (strain R).